Reading from the N-terminus, the 727-residue chain is Telomere repeats-binding bouquet formation protein 1 (727 aa).

ARM repeat units follow at residues Glu101 to Gly144 and Asn339 to Pro382. A coiled-coil region spans residues Glu398–Thr446. Over residues Arg457–His468 the composition is skewed to basic and acidic residues. Positions Arg457 to Thr493 are disordered. Positions Gln523–Pro662 are interaction with TERF1. Thr648 carries the post-translational modification Phosphothreonine. A Myb-like domain is found at Lys666–Thr719.

It belongs to the TERB1 family. Component of the MAJIN-TERB1-TERB2 complex, composed of MAJIN, TERB1 and TERB2. Interacts with TERF1, STAG3 and SUN1. Interacts (via Myb-like domain) with the cohesin complex; probably mediated via interaction with STAG3. Post-translationally, phosphorylated by CDK. Phosphorylation by CDK takes place in late prophase when the cap exchange is prominent. is important for the stabilization of telomere attachment but dispenable for the cap exchange.

The protein resides in the chromosome. It is found in the telomere. Its subcellular location is the nucleus inner membrane. In terms of biological role, meiosis-specific telomere-associated protein involved in meiotic telomere attachment to the nucleus inner membrane, a crucial step for homologous pairing and synapsis. Component of the MAJIN-TERB1-TERB2 complex, which promotes telomere cap exchange by mediating attachment of telomeric DNA to the inner nuclear membrane and replacement of the protective cap of telomeric chromosomes: in early meiosis, the MAJIN-TERB1-TERB2 complex associates with telomeric DNA and the shelterin/telosome complex. During prophase, the complex matures and promotes release of the shelterin/telosome complex from telomeric DNA. In the MAJIN-TERB1-TERB2 complex, TERB1 probably mediates association with the shelterin/telosome complex via interaction with TERF1, promoting priming telomeric DNA attachment'. Promotes telomere association with the nuclear envelope and deposition of the SUN-KASH/LINC complex. Also recruits cohesin to telomeres to develop structural rigidity. The sequence is that of Telomere repeats-binding bouquet formation protein 1 from Homo sapiens (Human).